The primary structure comprises 1430 residues: Nephrocystin-4 (1430 aa).

Residues 824–1430 (MRMGNVGRPP…ETFCVKVRYE (607 aa)) form a sufficient for basal bodies localization region. The interval 828–857 (NVGRPPEKKLKRRETLPPSNSRIITMHDGR) is disordered.

This sequence belongs to the NPHP4 family.

Its subcellular location is the cytoplasm. The protein localises to the cytoskeleton. The protein resides in the cilium basal body. In terms of biological role, involved in the organization of apical junctions. Required for building functional cilia. Involved in the organization of the subapical actin network in multiciliated epithelial cells. Seems to recruit int to basal bodies of motile cilia which subsequently interacts with actin-modifying proteins such as daam1. May down-regulate the canonical Wnt pathway and promote the Wnt-PCP pathway. Acts as a negative regulator of the hippo pathway. This chain is Nephrocystin-4 (nphp4), found in Xenopus laevis (African clawed frog).